We begin with the raw amino-acid sequence, 507 residues long: (6-4) photolyase (507 aa).

Residues 9–10, 32–40, and Gly-105 each bind 6,7-dimethyl-8-(1-D-ribityl)lumazine; these read GD and CEVMAEASY. Residues 265 to 269 and Asn-273 contribute to the FAD site; that span reads HSLLS. Cys-350 provides a ligand contact to [4Fe-4S] cluster. FAD-binding positions include 363-366, Asp-397, and Asn-406; that span reads YAHH. Positions 438, 441, and 454 each coordinate [4Fe-4S] cluster.

This sequence belongs to the iron-sulfur bacterial cryptochrome/photolyase (FeS-BCP) family. FAD is required as a cofactor. Requires 6,7-dimethyl-8-(1-D-ribityl)lumazine as cofactor. It depends on [4Fe-4S] cluster as a cofactor.

The catalysed reaction is (6-4) photoproduct (in DNA) = 2 pyrimidine residues (in DNA).. Photolyase involved in the repair of UV-induced (6-4) lesions in DNA. Catalyzes the photoreactivation of (6-4) pyrimidine-pyrimidone photoproducts by using blue-light energy. Can repair (6-4) photoproducts in ssDNA as well as in dsDNA. The sequence is that of (6-4) photolyase from Agrobacterium fabrum (strain C58 / ATCC 33970) (Agrobacterium tumefaciens (strain C58)).